The primary structure comprises 211 residues: Ribosomal RNA small subunit methyltransferase G (211 aa).

S-adenosyl-L-methionine contacts are provided by residues glycine 73, 125-126, and arginine 141; that span reads IE.

The protein belongs to the methyltransferase superfamily. RNA methyltransferase RsmG family.

The protein localises to the cytoplasm. The catalysed reaction is guanosine(527) in 16S rRNA + S-adenosyl-L-methionine = N(7)-methylguanosine(527) in 16S rRNA + S-adenosyl-L-homocysteine. Functionally, specifically methylates the N7 position of guanine in position 527 of 16S rRNA. The chain is Ribosomal RNA small subunit methyltransferase G from Methylobacterium radiotolerans (strain ATCC 27329 / DSM 1819 / JCM 2831 / NBRC 15690 / NCIMB 10815 / 0-1).